The sequence spans 678 residues: Dihydroxyacetone phosphate acyltransferase (678 aa).

Phosphoserine occurs at positions 12 and 17. Positions 161–166 (HRSYID) match the HXXXXD motif motif. Lysine 641 bears the N6-acetyllysine mark. Positions 676–678 (AKL) match the Microbody targeting signal motif.

This sequence belongs to the GPAT/DAPAT family. In terms of assembly, part of a heterotrimeric complex composed of GNPAT, AGPS and a modified form of GNPAT. Highly expressed in liver and testis. Lower levels in heart, brain, lung and kidney. Detected in spleen.

It is found in the peroxisome membrane. It carries out the reaction dihydroxyacetone phosphate + an acyl-CoA = a 1-acylglycerone 3-phosphate + CoA. The catalysed reaction is dihydroxyacetone phosphate + hexadecanoyl-CoA = 1-hexadecanoylglycerone 3-phosphate + CoA. It participates in membrane lipid metabolism; glycerophospholipid metabolism. In terms of biological role, dihydroxyacetonephosphate acyltransferase catalyzing the first step in the biosynthesis of plasmalogens, a subset of phospholipids that differ from other glycerolipids by having an alkyl chain attached through a vinyl ether linkage at the sn-1 position of the glycerol backbone, and which unique physical properties have an impact on various aspects of cell signaling and membrane biology. The sequence is that of Dihydroxyacetone phosphate acyltransferase from Mus musculus (Mouse).